Reading from the N-terminus, the 841-residue chain is Neuronal tyrosine-phosphorylated phosphoinositide-3-kinase adapter 1 (841 aa).

5 disordered regions span residues 1–45, 64–448, 655–679, 745–769, and 812–833; these read MNLL…PGVR, PASQ…PAAL, RAWN…TSGI, RPCS…PLPP, and LPSW…RRQH. The span at 8–25 shows a compositional bias: basic and acidic residues; the sequence is TKLEWRQHKEEEAKRSSS. The segment covering 26–39 has biased composition (low complexity); sequence KEVAPAGSAGPAAG. The segment at 76–186 is involved in CYFIP1- and NCKAP1-binding; that stretch reads SAMAPRSLSC…DESCPPGPSP (111 aa). Residues 94-103 are compositionally biased toward gly residues; it reads VGGGPGGASG. Residues 114–123 are compositionally biased toward basic residues; it reads PPAKPRRHPS. Residues 167 to 176 show a composition bias toward polar residues; the sequence is SPNTQLSVSF. Residues 224 to 243 are compositionally biased toward gly residues; that stretch reads FRGGGRSGGGLAGPPLGGGG. Positions 252–261 are enriched in acidic residues; it reads SDSEESEAIY. The span at 279–295 shows a compositional bias: pro residues; sequence GPPPLTATSPPQQPHAL. Residues 759–769 are compositionally biased toward pro residues; that stretch reads PALPLPLPLPP.

The protein belongs to the NYAP family. Interacts with ACOT9, ARHGAP26 and PIK3R2. Interacts with components of the WAVE1 complex, CYFIP1 and NCKAP1; this interaction mediates PI3K-WAVE1 association and actin cytoskeleton remodeling. In terms of processing, phosphorylated on tyrosine residues by FYN upon stimulation with CNTN5.

Its function is as follows. Activates PI3K and concomitantly recruits the WAVE1 complex to the close vicinity of PI3K and regulates neuronal morphogenesis. The chain is Neuronal tyrosine-phosphorylated phosphoinositide-3-kinase adapter 1 (NYAP1) from Homo sapiens (Human).